The primary structure comprises 165 residues: Thiol peroxidase (165 aa).

Residues 17-165 form the Thioredoxin domain; it reads PQVGEIVENF…NYEAALAVLA (149 aa). The active-site Cysteine sulfenic acid (-SOH) intermediate is the Cys-59. Residues Cys-59 and Cys-93 are joined by a disulfide bond.

Belongs to the peroxiredoxin family. Tpx subfamily. Homodimer.

It catalyses the reaction a hydroperoxide + [thioredoxin]-dithiol = an alcohol + [thioredoxin]-disulfide + H2O. Functionally, thiol-specific peroxidase that catalyzes the reduction of hydrogen peroxide and organic hydroperoxides to water and alcohols, respectively. Plays a role in cell protection against oxidative stress by detoxifying peroxides. The chain is Thiol peroxidase from Haemophilus influenzae (strain ATCC 51907 / DSM 11121 / KW20 / Rd).